Reading from the N-terminus, the 180-residue chain is ATP-dependent protease subunit HslV (180 aa).

T8 is an active-site residue. Residues A165, C168, and T171 each coordinate Na(+).

It belongs to the peptidase T1B family. HslV subfamily. A double ring-shaped homohexamer of HslV is capped on each side by a ring-shaped HslU homohexamer. The assembly of the HslU/HslV complex is dependent on binding of ATP.

It localises to the cytoplasm. It catalyses the reaction ATP-dependent cleavage of peptide bonds with broad specificity.. Its activity is regulated as follows. Allosterically activated by HslU binding. Its function is as follows. Protease subunit of a proteasome-like degradation complex believed to be a general protein degrading machinery. The protein is ATP-dependent protease subunit HslV of Macrococcus caseolyticus (strain JCSC5402) (Macrococcoides caseolyticum).